The sequence spans 517 residues: Ribonuclease Y (517 aa).

The helical transmembrane segment at 1-21 threads the bilayer; it reads MIEVLIGLGAGVAGVGAGYLY. The KH domain occupies 207 to 273; sequence LINVVNIKND…TRVIELLVED (67 aa). The 94-residue stretch at 333-426 folds into the HD domain; sequence ALAHSLEVAH…VCAADCLSAA (94 aa).

The protein belongs to the RNase Y family.

The protein localises to the cell membrane. Functionally, endoribonuclease that initiates mRNA decay. The protein is Ribonuclease Y of Campylobacter curvus (strain 525.92).